The sequence spans 421 residues: 3-isopropylmalate dehydratase large subunit (421 aa).

The [4Fe-4S] cluster site is built by cysteine 301, cysteine 361, and cysteine 364.

This sequence belongs to the aconitase/IPM isomerase family. LeuC type 2 subfamily. Heterodimer of LeuC and LeuD. [4Fe-4S] cluster is required as a cofactor.

It catalyses the reaction (2R,3S)-3-isopropylmalate = (2S)-2-isopropylmalate. It participates in amino-acid biosynthesis; L-leucine biosynthesis; L-leucine from 3-methyl-2-oxobutanoate: step 2/4. Its function is as follows. Catalyzes the isomerization between 2-isopropylmalate and 3-isopropylmalate, via the formation of 2-isopropylmaleate. This chain is 3-isopropylmalate dehydratase large subunit, found in Desulfitobacterium hafniense (strain Y51).